Here is a 53-residue protein sequence, read N- to C-terminus: Light-harvesting protein B800/850/890 beta-1 chain (53 aa).

At 1-19 (ADNMSLTGLSDEEAKEFHS) the chain is on the cytoplasmic side. Positions 18 and 36 each coordinate a bacteriochlorophyll. Residues 20–42 (IFMQSFLIFTAVAVVAHFLAWAW) form a helical membrane-spanning segment. Topologically, residues 43-53 (RPWIPGAEGYG) are periplasmic.

Belongs to the antenna complex beta subunit family. As to quaternary structure, the core complex is formed by different alpha and beta chains, binding bacteriochlorophyll molecules, and arranged most probably in tetrameric structures disposed around the reaction center. The non-pigmented gamma chains may constitute additional components.

It is found in the cell inner membrane. Functionally, antenna complexes are light-harvesting systems, which transfer the excitation energy to the reaction centers. The chain is Light-harvesting protein B800/850/890 beta-1 chain from Halorhodospira halophila (strain DSM 244 / SL1) (Ectothiorhodospira halophila (strain DSM 244 / SL1)).